A 477-amino-acid polypeptide reads, in one-letter code: Delayed-rectifier potassium channel regulatory subunit KCNS2 (477 aa).

At 1-184 (MTGQSLWDVS…LALDNPGYSV (184 aa)) the chain is on the cytoplasmic side. Residues 185 to 206 (LSRVFSILSILVVMGSIITMCL) form a helical membrane-spanning segment. The Extracellular portion of the chain corresponds to 207–225 (NSLPDFQIPDSQGNPGEDP). Residues 226–248 (RFEIVEHFGIAWFTFELVARFAV) traverse the membrane as a helical segment. Over 249–259 (APDFLKFFKNA) the chain is Cytoplasmic. Residues 260-280 (LNLIDLMSIVPFYITLVVNLV) traverse the membrane as a helical segment. The Extracellular segment spans residues 281-290 (VESTPTLANL). The chain crosses the membrane as a helical; Voltage-sensor span at residues 291–311 (GRVAQVLRLMRIFRILKLARH). Over 312–326 (STGLRSLGATLKYSY) the chain is Cytoplasmic. A helical membrane pass occupies residues 327–348 (KEVGLLLLYLSVGISIFSVVAY). Over 349-361 (TIEKEENEGLATI) the chain is Extracellular. An intramembrane region (helical) is located at residues 362–373 (PACWWWATVSMT). The short motif at 374-379 (TVGYGD) is the Selectivity filter element. An intramembrane segment occupies 374 to 381 (TVGYGDVV). Topologically, residues 382-388 (PGTTAGK) are extracellular. A helical membrane pass occupies residues 389–417 (LTASACILAGILVVVLPITLIFNKFSHFY). Over 418–477 (RRQKQLESAMRSCDFGDGMKEVPSVNLRDYYAHKVKSLMASLTNMSRSSPSELSLNDSLR) the chain is Cytoplasmic.

It belongs to the potassium channel family. S (TC 1.A.1.2) subfamily. Kv9.2/KCNS2 sub-subfamily. Heterotetramer with KCNB1 and KCNB2. Does not form homomultimers.

It localises to the cell membrane. Functionally, potassium channel regulatory subunit that modulate the delayed rectifier voltage-gated potassium channel activity of KCNB1 and KCNB2 by altering their kinetics, expression levels, and shifting the half-inactivation potential to more polarized values. While it does not form functional channels on its own, it can form functional heterotetrameric channels with KCNB1 and KCNB2. Each regulatory subunit has unique regulatory properties that can lead to extensive inhibition, significant changes in kinetics, and/or substantial shifts in the voltage dependencies of the inactivation process. In Homo sapiens (Human), this protein is Delayed-rectifier potassium channel regulatory subunit KCNS2.